Reading from the N-terminus, the 102-residue chain is NADH-quinone oxidoreductase subunit K (102 aa).

3 helical membrane passes run 6 to 26 (MEHG…GLLI), 30 to 50 (LLFI…AFVV), and 65 to 85 (ILVI…LLLL).

This sequence belongs to the complex I subunit 4L family. As to quaternary structure, NDH-1 is composed of 14 different subunits. Subunits NuoA, H, J, K, L, M, N constitute the membrane sector of the complex.

Its subcellular location is the cell inner membrane. It carries out the reaction a quinone + NADH + 5 H(+)(in) = a quinol + NAD(+) + 4 H(+)(out). In terms of biological role, NDH-1 shuttles electrons from NADH, via FMN and iron-sulfur (Fe-S) centers, to quinones in the respiratory chain. The immediate electron acceptor for the enzyme in this species is believed to be ubiquinone. Couples the redox reaction to proton translocation (for every two electrons transferred, four hydrogen ions are translocated across the cytoplasmic membrane), and thus conserves the redox energy in a proton gradient. In Aeromonas hydrophila subsp. hydrophila (strain ATCC 7966 / DSM 30187 / BCRC 13018 / CCUG 14551 / JCM 1027 / KCTC 2358 / NCIMB 9240 / NCTC 8049), this protein is NADH-quinone oxidoreductase subunit K.